Reading from the N-terminus, the 646-residue chain is Lipoteichoic acid synthase (646 aa).

The Cytoplasmic portion of the chain corresponds to 1–7; the sequence is MSLPKKK. Residues 8–28 traverse the membrane as a helical segment; the sequence is IGIFAFFLLTVFTITLKTYFS. Residues 29–43 are Extracellular-facing; sequence YYVDFSLGVKGLVQN. The helical transmembrane segment at 44–64 threads the bilayer; it reads LILIMNPYSLIALVLSVFLFF. Over 65 to 68 the chain is Cytoplasmic; the sequence is KGKK. The helical transmembrane segment at 69–89 threads the bilayer; it reads AFWFIFIGGFLLTFLLYANVV. Residues 90-119 are Extracellular-facing; the sequence is YFRFFSDFLTFSTLNQAGNVESMGGAVSAS. A helical membrane pass occupies residues 120 to 140; sequence FKWYDFVYFIDTIIYLAILIF. At 141 to 153 the chain is on the cytoplasmic side; sequence KRKWLDNRAFSKK. A helical transmembrane segment spans residues 154–174; that stretch reads FVPVVMATSVALFFLNLAFAE. Over 175-646 the chain is Extracellular; the sequence is TDRPELLTRT…KSGPKGNEKK (472 aa). The Mn(2+) site is built by E255 and T300. Residue T300 is part of the active site. Substrate is bound at residue H416. Mn(2+) contacts are provided by D475 and H476.

It belongs to the LTA synthase family. In terms of processing, proteolytically cleaved.

It localises to the cell membrane. It is found in the secreted. The protein operates within cell wall biogenesis; lipoteichoic acid biosynthesis. Functionally, catalyzes the polymerization of lipoteichoic acid (LTA) polyglycerol phosphate, a reaction that presumably uses phosphatidylglycerol (PG) as substrate. Is required for staphylococcal growth and cell division process. The chain is Lipoteichoic acid synthase (ltaS) from Staphylococcus epidermidis (strain ATCC 12228 / FDA PCI 1200).